Reading from the N-terminus, the 220-residue chain is Ribose-5-phosphate isomerase A (220 aa).

Residues 28–31 (TGST), 81–84 (DGAD), and 94–97 (KGGG) each bind substrate. The active-site Proton acceptor is glutamate 103. Lysine 121 lines the substrate pocket.

Belongs to the ribose 5-phosphate isomerase family. Homodimer.

The enzyme catalyses aldehydo-D-ribose 5-phosphate = D-ribulose 5-phosphate. It functions in the pathway carbohydrate degradation; pentose phosphate pathway; D-ribose 5-phosphate from D-ribulose 5-phosphate (non-oxidative stage): step 1/1. In terms of biological role, catalyzes the reversible conversion of ribose-5-phosphate to ribulose 5-phosphate. The polypeptide is Ribose-5-phosphate isomerase A (Vesicomyosocius okutanii subsp. Calyptogena okutanii (strain HA)).